A 187-amino-acid chain; its full sequence is Adenine phosphoribosyltransferase (187 aa).

This sequence belongs to the purine/pyrimidine phosphoribosyltransferase family. In terms of assembly, homodimer.

It is found in the cytoplasm. It carries out the reaction AMP + diphosphate = 5-phospho-alpha-D-ribose 1-diphosphate + adenine. It participates in purine metabolism; AMP biosynthesis via salvage pathway; AMP from adenine: step 1/1. In terms of biological role, catalyzes a salvage reaction resulting in the formation of AMP, that is energically less costly than de novo synthesis. In Yersinia pseudotuberculosis serotype O:3 (strain YPIII), this protein is Adenine phosphoribosyltransferase.